A 383-amino-acid polypeptide reads, in one-letter code: Glycoprotein gp2 (383 aa).

The first 25 residues, 1–25, serve as a signal peptide directing secretion; the sequence is MGFIYARKLLLCMAVSIYAIGSTTT. The segment covering 24-75 has biased composition (low complexity); that stretch reads TTTETTTSSSSTSGSGQSTSSGTTNSSSSPTTSPPTTSSSPPTSTHTSSPST. The tract at residues 24–136 is disordered; the sequence is TTTETTTSSS…RNNSIEIVPQ (113 aa). The N-linked (GlcNAc...) asparagine; by host glycan is linked to N48. Residues 81-91 are compositionally biased toward basic residues; it reads HAGHHRGRAGG. N128 carries N-linked (GlcNAc...) asparagine; by host glycosylation. The helical transmembrane segment at 354–371 threads the bilayer; it reads LVAATTLTVTILCLLCCL.

The protein resides in the virion membrane. Its function is as follows. The glycoprotein gp2 from the avirulent strain Kentucky A (KyA) is probably non functional since this strain harbors an in-frame deletion of 1,242 nucleotides in gene 71. The sequence is that of Glycoprotein gp2 (US4) from Equus caballus (Horse).